We begin with the raw amino-acid sequence, 475 residues long: GTPase Der (475 aa).

EngA-type G domains lie at 3 to 167 (LTIA…GGER) and 205 to 380 (LRIA…RVWN). Residues 9–16 (GRPNVGKS), 56–60 (DTAGL), 119–122 (NKSE), 211–218 (GRPNTGKS), 258–262 (DTAGL), and 323–326 (NKWD) contribute to the GTP site. The KH-like domain occupies 381–465 (RRISTGKLNR…PIRISLRASD (85 aa)).

This sequence belongs to the TRAFAC class TrmE-Era-EngA-EngB-Septin-like GTPase superfamily. EngA (Der) GTPase family. As to quaternary structure, associates with the 50S ribosomal subunit.

Functionally, GTPase that plays an essential role in the late steps of ribosome biogenesis. In Bartonella henselae (strain ATCC 49882 / DSM 28221 / CCUG 30454 / Houston 1) (Rochalimaea henselae), this protein is GTPase Der.